The primary structure comprises 406 residues: Elongation factor Tu, chloroplastic (406 aa).

The 203-residue stretch at Lys8–Lys210 folds into the tr-type G domain. GTP is bound by residues Gly17–Thr24, Asp77–His81, and Asn132–Asp135. Residue Thr24 coordinates Mg(2+).

The protein belongs to the TRAFAC class translation factor GTPase superfamily. Classic translation factor GTPase family. EF-Tu/EF-1A subfamily. In terms of assembly, monomer.

Its subcellular location is the plastid. It is found in the chloroplast. The enzyme catalyses GTP + H2O = GDP + phosphate + H(+). GTP hydrolase that promotes the GTP-dependent binding of aminoacyl-tRNA to the A-site of ribosomes during protein biosynthesis. The sequence is that of Elongation factor Tu, chloroplastic (tufA) from Chaetosphaeridium globosum (Charophycean green alga).